The sequence spans 459 residues: Precorrin-3B synthase (459 aa).

Cysteine 338, cysteine 344, cysteine 377, and cysteine 381 together coordinate [4Fe-4S] cluster. Residue cysteine 381 coordinates siroheme.

This sequence belongs to the nitrite and sulfite reductase 4Fe-4S domain family.

It carries out the reaction precorrin-3A + NADH + O2 + 2 H(+) = precorrin-3B + NAD(+) + H2O. It functions in the pathway cofactor biosynthesis; adenosylcobalamin biosynthesis; cob(II)yrinate a,c-diamide from precorrin-2 (aerobic route): step 2/10. Its function is as follows. Catalyzes the elimination of C-20 in precorrin-3A to form precorrin-3B. This is Precorrin-3B synthase (cobG) from Sinorhizobium sp.